A 684-amino-acid chain; its full sequence is MKKKLIYAAVVSALLAGCGGSDDNKGDTSSYLDYLLTGSNAVGPSALAARAWDGTLKFSTETADLSNPVSAMSTLDGWSTTQAIQIVPVTSSGITVQAPTTAEFGASVAPLYLLEVTFDSTALRPSGVKKVLTYGVDFVVAASAWQAEPGSAQAVEPLPCLANDSGHRTAERQSRRCLKAGSDYGNYKNNAGSNAQEQTINGLIALQEGLFKAATGIATDHVIFSDWFGTQSGADVLVAVKGAAASVLKADPVTLDAAKLWKQDAWEHQPARHLYPGRDRPTCLPDPAGCRAVPAAEQKDAIATAFGPVLRSTRLLKRPRSIPVPSSCLTSSPHRRPQVPGARPRPSPGTVPSQPVRHRQCAEGVTRSDRRAGGGGRGSGPAGDADCRSDPPERAAGRGEQADWGDAHLRRQAAGRRAEHWSLQPAADAGRGAIRADACLRQGCPQHHHGCHHLSARRDLGQRERLRPGAGPDLEDLCRHAGGQEGGAGGDRSSAARRAWLRLSGSMDTVTTSDNPTPYLNLSYLTVARDNLKQSVAICWACVWRLAWPTPRAIGTAGSLKVHFLGHSLGASRVPTCCGRQPDHRQRASGCPVQVRYRWPGHAGSHSAAAAELADFGPTIKMGVLTSGSAELKAGFTAYAPNCTDGGAYLLRQRVPAEPGRGHSATAATRCRVQLCGPVGAGFG.

The N-terminal stretch at 1 to 48 (MKKKLIYAAVVSALLAGCGGSDDNKGDTSSYLDYLLTGSNAVGPSALA) is a signal peptide. Disordered regions lie at residues 321-405 (SIPV…ADWG) and 462-493 (QRERLRPGAGPDLEDLCRHAGGQEGGAGGDRS). Residues 385 to 405 (ADCRSDPPERAAGRGEQADWG) are compositionally biased toward basic and acidic residues. Ser-568 acts as the Nucleophile in catalysis.

The protein belongs to the AB hydrolase superfamily. Lipase family. In terms of assembly, monomer.

It is found in the secreted. It catalyses the reaction a triacylglycerol + H2O = a diacylglycerol + a fatty acid + H(+). The optimum chain lengths for the acyl moiety is C6 for ester hydrolysis and C6 and C8 for triacylglycerol hydrolysis. In Aeromonas hydrophila, this protein is Extracellular lipase.